A 445-amino-acid chain; its full sequence is Phosphoglucosamine mutase 1 (445 aa).

The Phosphoserine intermediate role is filled by S102. 4 residues coordinate Mg(2+): S102, D241, D243, and D245. Phosphoserine is present on S102.

Belongs to the phosphohexose mutase family. It depends on Mg(2+) as a cofactor. Activated by phosphorylation.

It catalyses the reaction alpha-D-glucosamine 1-phosphate = D-glucosamine 6-phosphate. Catalyzes the conversion of glucosamine-6-phosphate to glucosamine-1-phosphate. In Shewanella frigidimarina (strain NCIMB 400), this protein is Phosphoglucosamine mutase 1.